A 43-amino-acid chain; its full sequence is Bacteriocin leucocin-C (43 aa).

Residues Cys-9 and Cys-14 are joined by a disulfide bond.

The protein localises to the secreted. Its function is as follows. Inhibits a wide spectrum of lactic acid bacteria. This chain is Bacteriocin leucocin-C, found in Leuconostoc mesenteroides.